Consider the following 445-residue polypeptide: MTRKYFGTDGIRGLVGEGPITPDFMLKLGWAAGRVLMDRFDGSNMILIGKDTRISGYMFESALQAGLINAGVDVGLLGPMPTPGVAYLTRTFQAQAGIVISASHNSYVDNGIKFFGGNGTKLPDDLEDLIEKQLEQPMVTAEKLGKAKRIQDASGRYIEFCKGTMPWGFNLKGMHLVIDCAHGATYNIAPNVFSELGAHVTPIFVDPNGTNINRGCGSTKPEALQEKVVELGADLGIAFDGDGDRVVFVDHKGELVDGDELLYIIAAYQQEYAGGCDGVVGTLMSNFGFELGLKKLGIPFARAKVGDRYVIEMMRERGWRLGGENSGHIVCSNVTTTGDGIISALQVLLAITTLGQKLHKIKKGMAKLPQVMINVHMAKRADLANNETIQRAVKLTEEKLGGSGRVLLRPSGTEPVVRVMVEGEDKAQVKELAQELASVVEAALS.

Residue S103 is the Phosphoserine intermediate of the active site. S103, D240, D242, and D244 together coordinate Mg(2+). Phosphoserine is present on S103.

The protein belongs to the phosphohexose mutase family. Mg(2+) is required as a cofactor. In terms of processing, activated by phosphorylation.

The enzyme catalyses alpha-D-glucosamine 1-phosphate = D-glucosamine 6-phosphate. In terms of biological role, catalyzes the conversion of glucosamine-6-phosphate to glucosamine-1-phosphate. This Cellvibrio japonicus (strain Ueda107) (Pseudomonas fluorescens subsp. cellulosa) protein is Phosphoglucosamine mutase.